The sequence spans 98 residues: NADH-ubiquinone oxidoreductase chain 4L (98 aa).

Helical transmembrane passes span 2-22, 29-49, and 61-81; these read PSISINITLAFTTALLGMLMF, SLLCLEGMMLSMFILSTLIIL, and ILLLVFAACEAAIGLALLVMI.

This sequence belongs to the complex I subunit 4L family. In terms of assembly, core subunit of respiratory chain NADH dehydrogenase (Complex I) which is composed of 45 different subunits.

It is found in the mitochondrion inner membrane. The catalysed reaction is a ubiquinone + NADH + 5 H(+)(in) = a ubiquinol + NAD(+) + 4 H(+)(out). Functionally, core subunit of the mitochondrial membrane respiratory chain NADH dehydrogenase (Complex I) which catalyzes electron transfer from NADH through the respiratory chain, using ubiquinone as an electron acceptor. Part of the enzyme membrane arm which is embedded in the lipid bilayer and involved in proton translocation. The chain is NADH-ubiquinone oxidoreductase chain 4L (MT-ND4L) from Mirza coquereli (Coquerel's giant mouse lemur).